The sequence spans 288 residues: Aminoglycoside 6-adenylyltransferase (288 aa).

The enzyme catalyses streptomycin + ATP = 6-O-adenylylstreptomycin + diphosphate. Its function is as follows. Mediates bacterial resistance to streptomycin, is probably a streptomycin 6-adenylyltransferase. The polypeptide is Aminoglycoside 6-adenylyltransferase (Campylobacter jejuni).